The chain runs to 316 residues: MST50-interacting protein 11 (316 aa).

WD repeat units lie at residues 13–53 (GHNG…TSYG), 61–100 (GHSHIVSDCVISSDGAYALSASWDKTLRLWELATGTTTRR), 103–142 (GHTNDVLSVSFSADNRQIVSGSRDRSIKLWNTLGDCKYTI), 146–187 (GHSE…LQTD), 190–229 (GHTGYINTVTISPDGSLCASGGKDGTTMLWDLNESKHLYS), 231–269 (NANDEIHALVFSPNRYWLCAATASSIIIFDLEKKSKVDE), and 281–316 (SREPECISLAWSADGQTLFAGYTDNIIRAWGVMSRA).

The protein belongs to the WD repeat G protein beta family. Ribosomal protein RACK1 subfamily. In terms of assembly, interacts with MST50 and MCK1.

Its function is as follows. Involved in regulating the cell wall integrity and MPS1 activation via its interaction with the MAPKKK MCK1. This chain is MST50-interacting protein 11, found in Pyricularia oryzae (strain 70-15 / ATCC MYA-4617 / FGSC 8958) (Rice blast fungus).